A 132-amino-acid polypeptide reads, in one-letter code: Small ribosomal subunit protein uS9 (132 aa).

The protein belongs to the universal ribosomal protein uS9 family.

The protein is Small ribosomal subunit protein uS9 (rps9) of Halobacterium salinarum (strain ATCC 700922 / JCM 11081 / NRC-1) (Halobacterium halobium).